A 378-amino-acid polypeptide reads, in one-letter code: Putative methyltransferase spot-1 (378 aa).

This sequence belongs to the class IV-like SAM-binding methyltransferase superfamily.

The protein resides in the cytoplasm. The protein localises to the cytoskeleton. It is found in the spindle. Its subcellular location is the chromosome. It localises to the centromere. The protein resides in the kinetochore. The protein localises to the microtubule organizing center. It is found in the centrosome. Required for association of the centrosomes with the poles of the bipolar mitotic spindle during metaphase. In Caenorhabditis elegans, this protein is Putative methyltransferase spot-1.